A 560-amino-acid chain; its full sequence is Oxygen-dependent choline dehydrogenase (560 aa).

8–37 (DYIIIGAGSAGNVLATRLTEDADVSVLLLE) is an FAD binding site. H475 acts as the Proton acceptor in catalysis.

Belongs to the GMC oxidoreductase family. FAD is required as a cofactor.

The enzyme catalyses choline + A = betaine aldehyde + AH2. It catalyses the reaction betaine aldehyde + NAD(+) + H2O = glycine betaine + NADH + 2 H(+). The protein operates within amine and polyamine biosynthesis; betaine biosynthesis via choline pathway; betaine aldehyde from choline (cytochrome c reductase route): step 1/1. Involved in the biosynthesis of the osmoprotectant glycine betaine. Catalyzes the oxidation of choline to betaine aldehyde and betaine aldehyde to glycine betaine at the same rate. The protein is Oxygen-dependent choline dehydrogenase of Stenotrophomonas maltophilia (strain K279a).